The primary structure comprises 48 residues: Large ribosomal subunit protein bL32 (48 aa).

Over residues 1–20 (MAVPKRRVSKTRAAKRRTHY) the composition is skewed to basic residues. The segment at 1-48 (MAVPKRRVSKTRAAKRRTHYKVSLPMPIKDKDGSYKMPHRANPTTKEY) is disordered.

The protein belongs to the bacterial ribosomal protein bL32 family.

This is Large ribosomal subunit protein bL32 (rpmF) from Campylobacter jejuni subsp. jejuni serotype O:2 (strain ATCC 700819 / NCTC 11168).